A 96-amino-acid polypeptide reads, in one-letter code: MALVRGFMAAKKILGGSVAGTRKETSAPKGFLAVYVGESQRKKQRHLVPVSYLNQPLFQALLIKAEEEFGFNHPMGGLTIPCPEDTFLTVTSQIQG.

The protein belongs to the ARG7 family.

It localises to the cell membrane. Functions as a positive effector of cell expansion through modulation of auxin transport. Involved in thermo-responsiveness of plant architecture. Enhances plasma membrane H(+)-ATPase. In Arabidopsis thaliana (Mouse-ear cress), this protein is Auxin-responsive protein SAUR29.